Reading from the N-terminus, the 838-residue chain is uncharacterized protein (838 aa).

This is an uncharacterized protein from Rickettsia conorii (strain ATCC VR-613 / Malish 7).